The primary structure comprises 136 residues: Putative pre-16S rRNA nuclease (136 aa).

It belongs to the YqgF nuclease family.

The protein localises to the cytoplasm. In terms of biological role, could be a nuclease involved in processing of the 5'-end of pre-16S rRNA. The sequence is that of Putative pre-16S rRNA nuclease from Francisella philomiragia subsp. philomiragia (strain ATCC 25017 / CCUG 19701 / FSC 153 / O#319-036).